A 128-amino-acid polypeptide reads, in one-letter code: UPF0102 protein MAV_3752 (128 aa).

Belongs to the UPF0102 family.

The polypeptide is UPF0102 protein MAV_3752 (Mycobacterium avium (strain 104)).